Consider the following 393-residue polypeptide: NAD(P)H-quinone oxidoreductase subunit H, chloroplastic (393 aa).

The protein belongs to the complex I 49 kDa subunit family. NDH is composed of at least 16 different subunits, 5 of which are encoded in the nucleus.

The protein resides in the plastid. It localises to the chloroplast thylakoid membrane. The catalysed reaction is a plastoquinone + NADH + (n+1) H(+)(in) = a plastoquinol + NAD(+) + n H(+)(out). The enzyme catalyses a plastoquinone + NADPH + (n+1) H(+)(in) = a plastoquinol + NADP(+) + n H(+)(out). In terms of biological role, NDH shuttles electrons from NAD(P)H:plastoquinone, via FMN and iron-sulfur (Fe-S) centers, to quinones in the photosynthetic chain and possibly in a chloroplast respiratory chain. The immediate electron acceptor for the enzyme in this species is believed to be plastoquinone. Couples the redox reaction to proton translocation, and thus conserves the redox energy in a proton gradient. The protein is NAD(P)H-quinone oxidoreductase subunit H, chloroplastic of Vitis vinifera (Grape).